A 588-amino-acid chain; its full sequence is Arginine--tRNA ligase (588 aa).

The 'HIGH' region signature appears at 129–139 (PNIAKEMHVGH).

It belongs to the class-I aminoacyl-tRNA synthetase family. Monomer.

Its subcellular location is the cytoplasm. The enzyme catalyses tRNA(Arg) + L-arginine + ATP = L-arginyl-tRNA(Arg) + AMP + diphosphate. The sequence is that of Arginine--tRNA ligase from Frankia casuarinae (strain DSM 45818 / CECT 9043 / HFP020203 / CcI3).